A 161-amino-acid chain; its full sequence is Regulator of ribonuclease activity A (161 aa).

It belongs to the RraA family. In terms of assembly, homotrimer. Binds to both RNA-binding sites in the C-terminal region of Rne and to RhlB.

Its subcellular location is the cytoplasm. Functionally, globally modulates RNA abundance by binding to RNase E (Rne) and regulating its endonucleolytic activity. Can modulate Rne action in a substrate-dependent manner by altering the composition of the degradosome. Modulates RNA-binding and helicase activities of the degradosome. In Photobacterium profundum (strain SS9), this protein is Regulator of ribonuclease activity A.